We begin with the raw amino-acid sequence, 290 residues long: Lipoyl synthase (290 aa).

[4Fe-4S] cluster contacts are provided by cysteine 44, cysteine 49, cysteine 55, cysteine 70, cysteine 74, cysteine 77, and serine 282. The region spanning 56–271 (WGEGTATFMI…ELLGKEMGFR (216 aa)) is the Radical SAM core domain.

It belongs to the radical SAM superfamily. Lipoyl synthase family. Requires [4Fe-4S] cluster as cofactor.

Its subcellular location is the cytoplasm. The catalysed reaction is [[Fe-S] cluster scaffold protein carrying a second [4Fe-4S](2+) cluster] + N(6)-octanoyl-L-lysyl-[protein] + 2 oxidized [2Fe-2S]-[ferredoxin] + 2 S-adenosyl-L-methionine + 4 H(+) = [[Fe-S] cluster scaffold protein] + N(6)-[(R)-dihydrolipoyl]-L-lysyl-[protein] + 4 Fe(3+) + 2 hydrogen sulfide + 2 5'-deoxyadenosine + 2 L-methionine + 2 reduced [2Fe-2S]-[ferredoxin]. The protein operates within protein modification; protein lipoylation via endogenous pathway; protein N(6)-(lipoyl)lysine from octanoyl-[acyl-carrier-protein]: step 2/2. In terms of biological role, catalyzes the radical-mediated insertion of two sulfur atoms into the C-6 and C-8 positions of the octanoyl moiety bound to the lipoyl domains of lipoate-dependent enzymes, thereby converting the octanoylated domains into lipoylated derivatives. This chain is Lipoyl synthase, found in Flavobacterium psychrophilum (strain ATCC 49511 / DSM 21280 / CIP 103535 / JIP02/86).